The primary structure comprises 124 residues: Small ribosomal subunit protein uS12 (124 aa).

3-methylthioaspartic acid is present on Asp89.

This sequence belongs to the universal ribosomal protein uS12 family. As to quaternary structure, part of the 30S ribosomal subunit. Contacts proteins S8 and S17. May interact with IF1 in the 30S initiation complex.

Functionally, with S4 and S5 plays an important role in translational accuracy. In terms of biological role, interacts with and stabilizes bases of the 16S rRNA that are involved in tRNA selection in the A site and with the mRNA backbone. Located at the interface of the 30S and 50S subunits, it traverses the body of the 30S subunit contacting proteins on the other side and probably holding the rRNA structure together. The combined cluster of proteins S8, S12 and S17 appears to hold together the shoulder and platform of the 30S subunit. The sequence is that of Small ribosomal subunit protein uS12 from Shewanella frigidimarina (strain NCIMB 400).